We begin with the raw amino-acid sequence, 358 residues long: Chorismate synthase (358 aa).

Arginine 46 is an NADP(+) binding site. FMN contacts are provided by residues 123 to 125 (RSS), 235 to 236 (NA), glycine 275, 290 to 294 (KPTPS), and arginine 316.

The protein belongs to the chorismate synthase family. Homotetramer. FMNH2 serves as cofactor.

It catalyses the reaction 5-O-(1-carboxyvinyl)-3-phosphoshikimate = chorismate + phosphate. Its pathway is metabolic intermediate biosynthesis; chorismate biosynthesis; chorismate from D-erythrose 4-phosphate and phosphoenolpyruvate: step 7/7. In terms of biological role, catalyzes the anti-1,4-elimination of the C-3 phosphate and the C-6 proR hydrogen from 5-enolpyruvylshikimate-3-phosphate (EPSP) to yield chorismate, which is the branch point compound that serves as the starting substrate for the three terminal pathways of aromatic amino acid biosynthesis. This reaction introduces a second double bond into the aromatic ring system. The polypeptide is Chorismate synthase (Sulfurimonas denitrificans (strain ATCC 33889 / DSM 1251) (Thiomicrospira denitrificans (strain ATCC 33889 / DSM 1251))).